A 667-amino-acid polypeptide reads, in one-letter code: Increased rDNA silencing protein 4 (667 aa).

Polar residues-rich tracts occupy residues 1–10, 18–33, and 46–61; these read MSAGQSTSQA, SIST…SKVH, and GRLT…NAIN. Disordered regions lie at residues 1-123, 133-152, 234-441, and 459-488; these read MSAG…PSNM, AKRH…PSDM, SSFE…SDFE, and HQKS…DVDK. A compositionally biased stretch (basic and acidic residues) spans 81–91; the sequence is HETKKNVENNR. Positions 92–109 are enriched in polar residues; the sequence is QRSSSPSPLYRTTTPKQM. Over residues 110-121 the composition is skewed to low complexity; the sequence is TSPSTSSASLPS. A compositionally biased stretch (basic and acidic residues) spans 133-144; that stretch reads AKRHASEAKRLA. The segment covering 234–248 has biased composition (polar residues); it reads SSFESVPSAYSNPDS. Basic and acidic residues predominate over residues 276–289; it reads SPREDSDIDQERRN. Over residues 298–312 the composition is skewed to low complexity; sequence SSNACARSANSAGSA. The segment covering 325–335 has biased composition (basic and acidic residues); sequence QVEKEKNEDKN. Residues 358–371 are compositionally biased toward low complexity; the sequence is SDSSSLNPGSSRSS. Composition is skewed to polar residues over residues 376-394 and 424-437; these read SYST…SNDS and SNQN…SGSE. An EH domain is found at 568 to 661; it reads GGYQSAEFHN…ESLEGIGVSV (94 aa).

Belongs to the IRS4 family.

In terms of biological role, positive regulator of phosphatidylinositol 4,5-bisphosphate turnover and negatively regulates signaling through the cell integrity pathway. Involved in rDNA silencing. This Meyerozyma guilliermondii (strain ATCC 6260 / CBS 566 / DSM 6381 / JCM 1539 / NBRC 10279 / NRRL Y-324) (Yeast) protein is Increased rDNA silencing protein 4 (IRS4).